A 1479-amino-acid chain; its full sequence is MHKLIIKYNKQLKMLNLRDGKTYTISEDERADITLKSLGEVIHLEQNNQGTWQANHTSINKVLVRKGDLDDITLQLYTEADYASFAYPSIQDTMTIGPNAYDDMVIQSLMNAIIIKDFQSIQESQYVRIVHDKNTDVYINYELQEQLTNKAYIGDHIYVEGIWLEVQADGLNVLSQNTVASSLIRLTQEMPHAQADDYNTYHRSPRIIHREPTDDIKIERPPQPIQKNNTVIWRSIIPPLVMIALTVVIFLVRPIGIYILMMIGMSSVTIVFGITTYFSEKKKYNKDVEKREKDYKDYLDNKSKEINKAIKAQRFSLNYHYPTVAEIKDIVETKAPRIYEKTSHHHDFLHYKLGIANVEKSFKLDYQEEEFNQRRDELFDDAKELYEFYTDVEQAPLINDLNHGPIAYIGARHLILEELEKMLIQLSIFHSYHDLEFLFVTREDEVETLKWARWLPHMTLRGQNIRGFVYNQRTRDQILTSIYSMIKERIQAVRERSKSNEQIIFTPQLVFVITDMSLIIDHVILEYVNQDLSEYGISLIFVEDVIESLPEHVDTIIDIKSRTEGELITKEKELVQLKFTPENIDNVDKEYIARRLANLIHVEHLKNAIPDSITFLEMYNVKEVDQLDVVNRWRQNETYKTMAVPLGVRGKDDILSLNLHEKAHGPHGLVAGTTGSGKSEIIQSYILSLAINFHPHEVAFLLIDYKGGGMANLFKDLVHLVGTITNLDGDEAMRALTSIKAELRKRQRLFGEHDVNHINQYHKLFKEGIATEPMPHLFIISDEFAELKSEQPDFMKELVSTARIGRSLGIHLILATQKPSGVVDDQIWSNSKFKLALKVQDRQDSNEILKTPDAADITLPGRAYLQVGNNEIYELFQSAWSGATYDIEGDKLEVEDKTIYMINDYGQLQAINKDLSGLEDEETKENQTELEAVIDHIESITTRLEIEEVKRPWLPPLPENVYQEDLVETDFRKLWSDDAKEVELTLGLKDVPEEQYQGPMVLQLKKAGHIALIGSPGYGRTTFLHNIIFDVARHHRPDQAHMYLFDFGTNGLMPVTDIPHVADYFTVDQEDKIAKAIRIFNDEIDRRKKILSQYRVTSISEYRKLTGETIPHVFILIDNFDAVKDSPFQEVFENMMIKMTREGLALDMQVTLTASRANAMKTPMYINMKTRIAMFLYDKSEVSNVVGQQKFAVKDVVGRALLSSDDNVSFHIGQPFKHDETKSYNDQINDEVSAMTEFYKGETPSDIPMMPDEIKYEDYRESLSLPDIVANGALPIGLDYEGVTLQKIKLTEPAMISSENPREIAHIAEIMMKEIDILNEKYAICIADSSGEFKAYRHQVANFAEEREDIKAIHQLMIEDLKQREMDGPFEKDSLYIINDFKTFIDCTYIPEDDVKKLITKGPELGLNILFVGIHKELIDAYDKQIDVARKMINQFSIGIRISDQQFFKFRFIQREPVIKENEAYMVANQAYQKIRWFK.

The Cytoplasmic segment spans residues 1–229 (MHKLIIKYNK…RPPQPIQKNN (229 aa)). Residues 230 to 252 (TVIWRSIIPPLVMIALTVVIFLV) form a helical membrane-spanning segment. At 253–256 (RPIG) the chain is on the extracellular side. A helical transmembrane segment spans residues 257–279 (IYILMMIGMSSVTIVFGITTYFS). Topologically, residues 280–1479 (EKKKYNKDVE…QAYQKIRWFK (1200 aa)) are cytoplasmic. FtsK domains follow at residues 652–846 (DDIL…QDSN) and 997–1183 (QGPM…SEVS). ATP contacts are provided by residues 672–679 (GTTGSGKS) and 1014–1021 (GSPGYGRT).

This sequence belongs to the EssC family. In terms of assembly, homooligomer. Interacts with EsaE.

It is found in the cell membrane. Component of the type VII secretion system (Ess). Required for the secretion of substrates including EsxA and EsxB. However, unable to support secretion of the substrate protein EsxC. In Staphylococcus aureus (strain MSSA476), this protein is Type VII secretion system protein EssC.